We begin with the raw amino-acid sequence, 704 residues long: Polyribonucleotide nucleotidyltransferase (704 aa).

Positions 488 and 494 each coordinate Mg(2+). Positions 555 to 614 constitute a KH domain; that stretch reads PRITTLKINPEKIRDVIGKGGATIRALTEETGTTIELEDDGTVKIASANGDATKEAIRRI. The region spanning 624–692 is the S1 motif domain; the sequence is GTIYNGKVVR…RQGRVRLSMK (69 aa).

The protein belongs to the polyribonucleotide nucleotidyltransferase family. In terms of assembly, component of the RNA degradosome, which is a multiprotein complex involved in RNA processing and mRNA degradation. Requires Mg(2+) as cofactor.

It localises to the cytoplasm. It catalyses the reaction RNA(n+1) + phosphate = RNA(n) + a ribonucleoside 5'-diphosphate. Its function is as follows. Involved in mRNA degradation. Catalyzes the phosphorolysis of single-stranded polyribonucleotides processively in the 3'- to 5'-direction. The chain is Polyribonucleotide nucleotidyltransferase from Shewanella sediminis (strain HAW-EB3).